The sequence spans 548 residues: T-complex protein 1 subunit theta (548 aa).

Ala2 is modified (N-acetylalanine). Ser23 carries the post-translational modification Phosphoserine. The residue at position 30 (Tyr30) is a Phosphotyrosine. 2 residues coordinate ADP: Tyr47 and Gly48. A Mg(2+)-binding site is contributed by Asp99. ADP-binding residues include Gly100, Thr101, Asn102, and Phe103. ATP-binding residues include Gly100, Thr101, and Asn102. Residue Ser162 is modified to Phosphoserine. Residues Met169, Ser170, and Lys171 each contribute to the ADP site. ATP is bound by residues Ser170 and Lys171. Residues Lys224, Lys254, and Lys260 each participate in a glycyl lysine isopeptide (Lys-Gly) (interchain with G-Cter in SUMO2) cross-link. 2 positions are modified to phosphoserine: Ser269 and Ser317. Lys318 and Lys400 each carry N6-acetyllysine. Gly412 lines the ADP pocket. Residue Gly412 coordinates ATP. A Glycyl lysine isopeptide (Lys-Gly) (interchain with G-Cter in SUMO1) cross-link involves residue Lys459. Lys466 is modified (N6-acetyllysine). Position 499 (Asp499) interacts with ADP. Residues Asp499 and Lys504 each contribute to the ATP site. Phosphotyrosine is present on Tyr505. The segment at Pro529–Asp548 is disordered. A Glycyl lysine isopeptide (Lys-Gly) (interchain with G-Cter in SUMO2) cross-link involves residue Lys534. Ser537 is modified (phosphoserine). Residue Lys539 forms a Glycyl lysine isopeptide (Lys-Gly) (interchain with G-Cter in SUMO2) linkage.

It belongs to the TCP-1 chaperonin family. As to quaternary structure, component of the chaperonin-containing T-complex (TRiC), a hexadecamer composed of two identical back-to-back stacked rings enclosing a protein folding chamber. Each ring is made up of eight different subunits: TCP1/CCT1, CCT2, CCT3, CCT4, CCT5, CCT6A/CCT6, CCT7, CCT8. Interacts with PACRG. Interacts with DNAAF4. Interacts with synaptic plasticity regulator PANTS.

Its subcellular location is the cytoplasm. It localises to the cytoskeleton. The protein localises to the microtubule organizing center. The protein resides in the centrosome. It is found in the cilium basal body. It catalyses the reaction ATP + H2O = ADP + phosphate + H(+). Component of the chaperonin-containing T-complex (TRiC), a molecular chaperone complex that assists the folding of actin, tubulin and other proteins upon ATP hydrolysis. The TRiC complex mediates the folding of WRAP53/TCAB1, thereby regulating telomere maintenance. As part of the TRiC complex may play a role in the assembly of BBSome, a complex involved in ciliogenesis regulating transports vesicles to the cilia. The chain is T-complex protein 1 subunit theta (CCT8) from Bos taurus (Bovine).